The following is a 363-amino-acid chain: Holliday junction branch migration complex subunit RuvB (363 aa).

Residues 1–23 (MHKDEDQRLLGPAPLPNDPDRSL) form a disordered region. Residues 1–184 (MHKDEDQRLL…FGIPIRLNFY (184 aa)) are large ATPase domain (RuvB-L). ATP contacts are provided by residues Leu23, Arg24, Gly65, Lys68, Thr69, Thr70, 131 to 133 (EDY), Arg174, Tyr184, and Arg221. Thr69 contributes to the Mg(2+) binding site. Residues 185–255 (TIEELEYIVQ…IADEALSRLE (71 aa)) form a small ATPAse domain (RuvB-S) region. Residues 258–363 (HLGLDPLDRR…QTTLWDGEDD (106 aa)) form a head domain (RuvB-H) region. DNA-binding residues include Arg294, Arg313, and Arg318.

Belongs to the RuvB family. Homohexamer. Forms an RuvA(8)-RuvB(12)-Holliday junction (HJ) complex. HJ DNA is sandwiched between 2 RuvA tetramers; dsDNA enters through RuvA and exits via RuvB. An RuvB hexamer assembles on each DNA strand where it exits the tetramer. Each RuvB hexamer is contacted by two RuvA subunits (via domain III) on 2 adjacent RuvB subunits; this complex drives branch migration. In the full resolvosome a probable DNA-RuvA(4)-RuvB(12)-RuvC(2) complex forms which resolves the HJ.

It is found in the cytoplasm. It carries out the reaction ATP + H2O = ADP + phosphate + H(+). The RuvA-RuvB-RuvC complex processes Holliday junction (HJ) DNA during genetic recombination and DNA repair, while the RuvA-RuvB complex plays an important role in the rescue of blocked DNA replication forks via replication fork reversal (RFR). RuvA specifically binds to HJ cruciform DNA, conferring on it an open structure. The RuvB hexamer acts as an ATP-dependent pump, pulling dsDNA into and through the RuvAB complex. RuvB forms 2 homohexamers on either side of HJ DNA bound by 1 or 2 RuvA tetramers; 4 subunits per hexamer contact DNA at a time. Coordinated motions by a converter formed by DNA-disengaged RuvB subunits stimulates ATP hydrolysis and nucleotide exchange. Immobilization of the converter enables RuvB to convert the ATP-contained energy into a lever motion, pulling 2 nucleotides of DNA out of the RuvA tetramer per ATP hydrolyzed, thus driving DNA branch migration. The RuvB motors rotate together with the DNA substrate, which together with the progressing nucleotide cycle form the mechanistic basis for DNA recombination by continuous HJ branch migration. Branch migration allows RuvC to scan DNA until it finds its consensus sequence, where it cleaves and resolves cruciform DNA. In Bartonella tribocorum (strain CIP 105476 / IBS 506), this protein is Holliday junction branch migration complex subunit RuvB.